The sequence spans 328 residues: Phenylalanine--tRNA ligase alpha subunit (328 aa).

E253 is a binding site for Mg(2+).

This sequence belongs to the class-II aminoacyl-tRNA synthetase family. Phe-tRNA synthetase alpha subunit type 1 subfamily. As to quaternary structure, tetramer of two alpha and two beta subunits. Mg(2+) is required as a cofactor.

The protein resides in the cytoplasm. The enzyme catalyses tRNA(Phe) + L-phenylalanine + ATP = L-phenylalanyl-tRNA(Phe) + AMP + diphosphate + H(+). The sequence is that of Phenylalanine--tRNA ligase alpha subunit from Chromobacterium violaceum (strain ATCC 12472 / DSM 30191 / JCM 1249 / CCUG 213 / NBRC 12614 / NCIMB 9131 / NCTC 9757 / MK).